Reading from the N-terminus, the 196-residue chain is MVDNRRTFTAPQSLLETNLTFPNDEPSLTTITVTRERCVDPSLIDSFLRFLRHGSDDIIRQKLNNYRKGSINGKNKCKEFLKQELYPNWQIRNNIISFCEKEAAEMKNETDQQCGNNKKTTAEPLIDARIDPYAARERAEKQEAQYKDWTKVTEWVANNRKIEQILTSTTEGILRQNCEQNNDYLKEFTQFCKDNS.

Positions 99-114 match the Cx14C motif motif; that stretch reads CEKEAAEMKNETDQQC. The Cx13C motif signature appears at 178-192; sequence CEQNNDYLKEFTQFC.

It belongs to the MIX23 family.

The protein localises to the mitochondrion intermembrane space. Functionally, regulator of the mitochondrial protein import machinery that is localized in the mitochondrial intermembrane space (IMS) and facilitates the transport of proteins from the cytosol into the mitochondrial matrix. Not essential for mitochondrial protein import but induced and required when mitochondrial import is compromised. Stimulates or stabilizes the translocation into the mitochondria of proteins such as OXA1, ATP1 and COX12. This chain is Mitochondrial intermembrane space cysteine motif-containing protein MIX23, found in Saccharomyces cerevisiae (strain ATCC 204508 / S288c) (Baker's yeast).